The chain runs to 148 residues: uncharacterized protein (148 aa).

A compositionally biased stretch (polar residues) spans 1–11 (MKPRNINNSLP). The tract at residues 1–31 (MKPRNINNSLPLQPLVPDQENKNKKNEEKSV) is disordered. The span at 19-30 (QENKNKKNEEKS) shows a compositional bias: basic and acidic residues.

This is an uncharacterized protein from Escherichia coli (strain K12).